A 463-amino-acid chain; its full sequence is Adenylosuccinate synthetase, chloroplastic (463 aa).

GTP contacts are provided by residues 44 to 50 (GDEGKGK) and 72 to 74 (GHT). Asp45 serves as the catalytic Proton acceptor. 2 residues coordinate Mg(2+): Asp45 and Gly72. IMP contacts are provided by residues 45–48 (DEGK), 70–73 (NAGH), Thr164, Arg178, Asn256, Thr271, and Arg335. Catalysis depends on His73, which acts as the Proton donor. 331 to 337 (TTTGRPR) lines the substrate pocket. GTP is bound by residues Arg337, 363 to 365 (KLD), and 446 to 448 (GVG).

It belongs to the adenylosuccinate synthetase family. In terms of assembly, homodimer. Mg(2+) serves as cofactor.

It localises to the plastid. Its subcellular location is the chloroplast. It carries out the reaction IMP + L-aspartate + GTP = N(6)-(1,2-dicarboxyethyl)-AMP + GDP + phosphate + 2 H(+). It functions in the pathway purine metabolism; AMP biosynthesis via de novo pathway; AMP from IMP: step 1/2. Its function is as follows. Plays an important role in the de novo pathway and in the salvage pathway of purine nucleotide biosynthesis. Catalyzes the first committed step in the biosynthesis of AMP from IMP. This Chlamydomonas reinhardtii (Chlamydomonas smithii) protein is Adenylosuccinate synthetase, chloroplastic.